Consider the following 193-residue polypeptide: dCTP deaminase, dUMP-forming (193 aa).

Residues 107–112, aspartate 125, 133–135, glutamine 154, and tyrosine 168 each bind dCTP; these read RSSLGR and TLE. Catalysis depends on glutamate 135, which acts as the Proton donor/acceptor. The tract at residues 169–193 is disordered; sequence AESSGKYHGDERPSPSKMHLDFCRG. Positions 173–193 are enriched in basic and acidic residues; sequence GKYHGDERPSPSKMHLDFCRG.

This sequence belongs to the dCTP deaminase family. Homotrimer.

The enzyme catalyses dCTP + 2 H2O = dUMP + NH4(+) + diphosphate. The protein operates within pyrimidine metabolism; dUMP biosynthesis; dUMP from dCTP: step 1/1. Its function is as follows. Bifunctional enzyme that catalyzes both the deamination of dCTP to dUTP and the hydrolysis of dUTP to dUMP without releasing the toxic dUTP intermediate. This is dCTP deaminase, dUMP-forming from Methanopyrus kandleri (strain AV19 / DSM 6324 / JCM 9639 / NBRC 100938).